The following is an 851-amino-acid chain: Beta-galactosidase BoGH2A (851 aa).

The signal sequence occupies residues 1 to 19 (MMIGKLKYLMLGGCLILGS). Cys20 is lipidated: N-palmitoyl cysteine. A lipid anchor (S-diacylglycerol cysteine) is attached at Cys20. Catalysis depends on Glu437, which acts as the Proton donor. The active-site Nucleophile is Glu544.

This sequence belongs to the glycosyl hydrolase 2 family.

The protein localises to the cell inner membrane. It carries out the reaction Hydrolysis of terminal non-reducing beta-D-galactose residues in beta-D-galactosides.. Its pathway is glucan metabolism; xyloglucan degradation. Its function is as follows. Catalyzes the hydrolysis of terminal non-reducing beta-D-galactose residues in beta-D-galactosides in xyloglucan degradation, converting 'L' units to 'X' units. This chain is Beta-galactosidase BoGH2A, found in Bacteroides ovatus (strain ATCC 8483 / DSM 1896 / JCM 5824 / BCRC 10623 / CCUG 4943 / NCTC 11153).